The primary structure comprises 687 residues: uncharacterized protein (687 aa).

A compositionally biased stretch (low complexity) spans 277-295 (SVCSSQSFSSGQSDISMSS). Disordered stretches follow at residues 277–337 (SVCS…QDCD), 342–361 (DTESVANEPEPYSSTMSEMP), and 531–564 (HVEQAGGDYSSSGQKDQKKKRGKRPVSNPPPSLI). Over residues 300–313 (NGSSVGNGSLSPMT) the composition is skewed to polar residues.

This is an uncharacterized protein from Caenorhabditis elegans.